A 120-amino-acid chain; its full sequence is UPF0102 protein NT01CX_2205 (120 aa).

The protein belongs to the UPF0102 family.

This chain is UPF0102 protein NT01CX_2205, found in Clostridium novyi (strain NT).